A 440-amino-acid chain; its full sequence is Golgi-associated RAB2 interactor protein 2 (440 aa).

Belongs to the GARIN family. Interacts with CALM1. In terms of tissue distribution, expressed in testis (at protein level).

The protein localises to the cell projection. Its subcellular location is the cilium. It is found in the flagellum. In terms of biological role, seems to play a role in sperm motility. The polypeptide is Golgi-associated RAB2 interactor protein 2 (Mus musculus (Mouse)).